The chain runs to 542 residues: Chaperonin GroEL (542 aa).

ATP-binding positions include 29 to 32 (TIGP), 86 to 90 (DGTTT), glycine 413, 477 to 479 (NAA), and aspartate 493.

It belongs to the chaperonin (HSP60) family. In terms of assembly, forms a cylinder of 14 subunits composed of two heptameric rings stacked back-to-back. Interacts with the co-chaperonin GroES.

It localises to the cytoplasm. The enzyme catalyses ATP + H2O + a folded polypeptide = ADP + phosphate + an unfolded polypeptide.. Together with its co-chaperonin GroES, plays an essential role in assisting protein folding. The GroEL-GroES system forms a nano-cage that allows encapsulation of the non-native substrate proteins and provides a physical environment optimized to promote and accelerate protein folding. The sequence is that of Chaperonin GroEL from Lactobacillus acidophilus (strain ATCC 700396 / NCK56 / N2 / NCFM).